Consider the following 525-residue polypeptide: GMP synthase [glutamine-hydrolyzing] (525 aa).

A Glutamine amidotransferase type-1 domain is found at arginine 9–leucine 207. Residue cysteine 86 is the Nucleophile of the active site. Catalysis depends on residues histidine 181 and glutamate 183. Residues tryptophan 208–arginine 400 enclose the GMPS ATP-PPase domain. Serine 235–serine 241 is an ATP binding site.

Homodimer.

It carries out the reaction XMP + L-glutamine + ATP + H2O = GMP + L-glutamate + AMP + diphosphate + 2 H(+). It functions in the pathway purine metabolism; GMP biosynthesis; GMP from XMP (L-Gln route): step 1/1. In terms of biological role, catalyzes the synthesis of GMP from XMP. The chain is GMP synthase [glutamine-hydrolyzing] from Escherichia coli O127:H6 (strain E2348/69 / EPEC).